Reading from the N-terminus, the 117-residue chain is uncharacterized protein (117 aa).

This is an uncharacterized protein from Escherichia coli (strain K12).